The following is a 505-amino-acid chain: MAMASFGQLNLEEPPPIWGSRSVDCFEKLEQIGEGTYGQVYMAKEIKTGEIVALKKIRMDNEREGFPITAIREIKILKKLHHENVIQLKEIVTSPGRDRDDQGKPDNNKYKGGIYMVFEYMDHDLTGLADRPGLRFTVPQIKCYMKQLLTGLHYCHVNQVLHRDIKGSNLLIDNEGNLKLADFGLARSYSHDHTGNLTNRVITLWYRPPELLLGATKYGPAIDMWSVGCIFAELLHAKPILPGKNEQEQLNKIFELCGSPDEKLWPGVSKMPWFNNFKPARPLKRRVREFFRHFDRHALELLEKMLVLDPAQRISAKDALDAEYFWTDPLPCDPKSLPTYESSHEFQTKKKRQQQRQNEEAAKRQKLQHPPLQHSRLPPLQHGGQSHAAPHWPAGPNHPTNNAPPQVPAGPSHNFYGKPRGPPGPNRYPPSGNQSGGYNQSRGGYSSGSYPPQGRGAPYVAGPRGPSGGPYGVGPPNYTQGGQYGGSGSSGRGQNQRNQQYGWQQ.

In terms of domain architecture, Protein kinase spans 26-325 (FEKLEQIGEG…AKDALDAEYF (300 aa)). Residues 32-40 (IGEGTYGQV) and Lys-55 each bind ATP. Tyr-37 carries the post-translational modification Phosphotyrosine. Asp-164 (proton acceptor) is an active-site residue. Thr-198 is subject to Phosphothreonine. The tract at residues 336 to 505 (SLPTYESSHE…QRNQQYGWQQ (170 aa)) is disordered. Low complexity predominate over residues 429 to 456 (PPSGNQSGGYNQSRGGYSSGSYPPQGRG). Over residues 482-491 (GQYGGSGSSG) the composition is skewed to gly residues. Residues 492-505 (RGQNQRNQQYGWQQ) are compositionally biased toward low complexity.

Belongs to the protein kinase superfamily. CMGC Ser/Thr protein kinase family. CDC2/CDKX subfamily. Interacts with CYCT1-3. Highly expressed in flowers. Expressed in seedlings, roots, rosettes and stems.

The catalysed reaction is L-seryl-[protein] + ATP = O-phospho-L-seryl-[protein] + ADP + H(+). It catalyses the reaction L-threonyl-[protein] + ATP = O-phospho-L-threonyl-[protein] + ADP + H(+). It carries out the reaction [DNA-directed RNA polymerase] + ATP = phospho-[DNA-directed RNA polymerase] + ADP + H(+). This is Cyclin-dependent kinase C-1 (CDKC-1) from Arabidopsis thaliana (Mouse-ear cress).